We begin with the raw amino-acid sequence, 78 residues long: Acyl carrier protein (78 aa).

A Carrier domain is found at 1–76 (MAIHPKVKDI…DVASYLEKKG (76 aa)). S36 bears the O-(pantetheine 4'-phosphoryl)serine mark.

It belongs to the acyl carrier protein (ACP) family. 4'-phosphopantetheine is transferred from CoA to a specific serine of apo-ACP by AcpS. This modification is essential for activity because fatty acids are bound in thioester linkage to the sulfhydryl of the prosthetic group.

The protein localises to the cytoplasm. It participates in lipid metabolism; fatty acid biosynthesis. In terms of biological role, carrier of the growing fatty acid chain in fatty acid biosynthesis. The chain is Acyl carrier protein from Bdellovibrio bacteriovorus (strain ATCC 15356 / DSM 50701 / NCIMB 9529 / HD100).